The primary structure comprises 168 residues: uncharacterized protein (168 aa).

The region spanning 19 to 80 (LDKLDRHILN…VVSPKAVGRT (62 aa)) is the HTH asnC-type domain. A DNA-binding region (H-T-H motif) is located at residues 38–57 (LKELSEKVNSSVATCQRRVQ).

This is an uncharacterized protein from Haemophilus influenzae (strain ATCC 51907 / DSM 11121 / KW20 / Rd).